Here is a 357-residue protein sequence, read N- to C-terminus: DNA integrity scanning protein DisA (357 aa).

The DAC domain occupies 3–141 (RPTLRETVAR…GGERHVVADS (139 aa)). ATP is bound by residues G70, L88, and 101–105 (TRHRS).

This sequence belongs to the DisA family. In terms of assembly, homooctamer. Mg(2+) serves as cofactor.

It carries out the reaction 2 ATP = 3',3'-c-di-AMP + 2 diphosphate. Functionally, participates in a DNA-damage check-point. DisA forms globular foci that rapidly scan along the chromosomes searching for lesions. Its function is as follows. Also has diadenylate cyclase activity, catalyzing the condensation of 2 ATP molecules into cyclic di-AMP (c-di-AMP). c-di-AMP likely acts as a signaling molecule that may couple DNA integrity with a cellular process. The sequence is that of DNA integrity scanning protein DisA from Mycolicibacterium paratuberculosis (strain ATCC BAA-968 / K-10) (Mycobacterium paratuberculosis).